The chain runs to 400 residues: uncharacterized protein (400 aa).

The 220-residue stretch at 161–380 (NDLLNIIDIV…YVVKVIVMRL (220 aa)) folds into the TR mART core domain.

This is an uncharacterized protein from Acanthamoeba polyphaga (Amoeba).